Reading from the N-terminus, the 369-residue chain is Olfactory receptor 2T1 (369 aa).

The Extracellular segment spans residues 1-76; that stretch reads MWQEYYFLNV…LFNRKETSGL (76 aa). N56 carries N-linked (GlcNAc...) asparagine glycosylation. A helical transmembrane segment spans residues 77–97; the sequence is IFAIISIIFFTALMANGVMIF. Residues 98–107 lie on the Cytoplasmic side of the membrane; it reads LIQTDLRLHT. The helical transmembrane segment at 108 to 128 threads the bilayer; that stretch reads PMYFLLSHLSLIDMMYISTIV. At 129–148 the chain is on the extracellular side; the sequence is PKMLVNYLLDQRTISFVGCT. A disulfide bond links C147 and C239. The chain crosses the membrane as a helical span at residues 149-169; sequence AQHFLYLTLVGAEFFLLGLMA. Residues 170–191 are Cytoplasmic-facing; the sequence is YDRYVAICNPLRYPVLMSRRVC. The chain crosses the membrane as a helical span at residues 192–212; the sequence is WMIIAGSWFGGSLDGFLLTPI. Residues 213-247 are Extracellular-facing; the sequence is TMSFPFCNSREINHFFCEAPAVLKLACADTALYET. A helical transmembrane segment spans residues 248–268; it reads VMYVCCVLMLLIPFSVVLASY. The Cytoplasmic segment spans residues 269–286; it reads ARILTTVQCMSSVEGRKK. The chain crosses the membrane as a helical span at residues 287-307; it reads AFATCSSHMTVVSLFYGAAMY. Residues 308 to 321 are Extracellular-facing; sequence TYMLPHSYHKPAQD. Residues 322–342 form a helical membrane-spanning segment; that stretch reads KVLSVFYTILTPMLNPLIYSL. Topologically, residues 343–369 are cytoplasmic; sequence RNKDVTGALKRALGRFKGPQRVSGGVF.

It belongs to the G-protein coupled receptor 1 family.

It localises to the cell membrane. In terms of biological role, odorant receptor. The polypeptide is Olfactory receptor 2T1 (OR2T1) (Homo sapiens (Human)).